The following is a 439-amino-acid chain: Trigger factor (439 aa).

The 86-residue stretch at 170-255 folds into the PPIase FKBP-type domain; it reads GDTVVIDFDG…IHELKKLETP (86 aa).

This sequence belongs to the FKBP-type PPIase family. Tig subfamily.

The protein localises to the cytoplasm. The enzyme catalyses [protein]-peptidylproline (omega=180) = [protein]-peptidylproline (omega=0). Its function is as follows. Involved in protein export. Acts as a chaperone by maintaining the newly synthesized protein in an open conformation. Functions as a peptidyl-prolyl cis-trans isomerase. The protein is Trigger factor of Oenococcus oeni (strain ATCC BAA-331 / PSU-1).